The chain runs to 327 residues: AA9 family lytic polysaccharide monooxygenase G (327 aa).

An N-terminal signal peptide occupies residues 1 to 20; sequence MKLNLASLCFLASIAPLVSG. Cu(2+)-binding residues include histidine 21 and histidine 96. A disulfide bridge links cysteine 62 with cysteine 185. O2 is bound at residue histidine 172. Position 182 (tyrosine 182) interacts with Cu(2+). A glycan (N-linked (GlcNAc...) asparagine) is linked at asparagine 290. A CBM1 domain is found at 291-327; sequence GTIKKYYQCGGQGWTGSGSCEAGTSCREWNTWYFQCV.

Belongs to the polysaccharide monooxygenase AA9 family. It depends on Cu(2+) as a cofactor.

The protein resides in the secreted. It catalyses the reaction [(1-&gt;4)-beta-D-glucosyl]n+m + reduced acceptor + O2 = 4-dehydro-beta-D-glucosyl-[(1-&gt;4)-beta-D-glucosyl]n-1 + [(1-&gt;4)-beta-D-glucosyl]m + acceptor + H2O.. Its function is as follows. Lytic polysaccharide monooxygenase (LPMO) that depolymerizes crystalline and amorphous polysaccharides via the oxidation of scissile alpha- or beta-(1-4)-glycosidic bonds, yielding C1 or C4 oxidation products. Catalysis by LPMOs requires the reduction of the active-site copper from Cu(II) to Cu(I) by a reducing agent and H(2)O(2) or O(2) as a cosubstrate. This Aspergillus tamarii protein is AA9 family lytic polysaccharide monooxygenase G.